The sequence spans 691 residues: Elongation factor G (691 aa).

The region spanning 8–282 (ERVRNIGIAA…AVVDYLPAPV (275 aa)) is the tr-type G domain. GTP contacts are provided by residues 17–24 (AHIDAGKT), 81–85 (DTPGH), and 135–138 (NKMD).

The protein belongs to the TRAFAC class translation factor GTPase superfamily. Classic translation factor GTPase family. EF-G/EF-2 subfamily.

The protein localises to the cytoplasm. Its function is as follows. Catalyzes the GTP-dependent ribosomal translocation step during translation elongation. During this step, the ribosome changes from the pre-translocational (PRE) to the post-translocational (POST) state as the newly formed A-site-bound peptidyl-tRNA and P-site-bound deacylated tRNA move to the P and E sites, respectively. Catalyzes the coordinated movement of the two tRNA molecules, the mRNA and conformational changes in the ribosome. The chain is Elongation factor G from Prochlorococcus marinus (strain MIT 9303).